The following is an 883-amino-acid chain: Putative pentatricopeptide repeat-containing protein At1g13800 (883 aa).

PPR repeat units lie at residues 145–180 (LIRV…GRAP), 181–215 (DIKA…GLDA), 216–251 (DAHT…TRNP), 253–285 (VFYL…NILV), 290–324 (LGIA…GIDP), 325–359 (DVYV…RKRI), 360–394 (NCVI…NISL), 395–429 (DRVC…GIAP), 430–464 (DVIN…GKTP), 465–499 (DIVI…GVKP), 500–534 (TYVT…SREN), 537–561 (SMVK…LEFP), 563–598 (PKSV…GVEP), 599–633 (EKSM…KIVP), 634–668 (DLFT…DVKP), 697–731 (DVVY…EIVP), 760–794 (DVFY…GVDP), 795–829 (DAAP…GVKP), and 830–864 (DVVP…GIKP).

It belongs to the PPR family. P subfamily.

This Arabidopsis thaliana (Mouse-ear cress) protein is Putative pentatricopeptide repeat-containing protein At1g13800.